Reading from the N-terminus, the 141-residue chain is Hemoglobin subunit alpha-D/D' (141 aa).

The Globin domain occupies 1–141; it reads MLTADDKKLI…VAAVLAEKYR (141 aa). Residues His58 and His87 each contribute to the heme b site.

This sequence belongs to the globin family. As to quaternary structure, heterotetramer of two alpha-D chains and two beta chains. In terms of tissue distribution, red blood cells.

In terms of biological role, involved in oxygen transport from the lung to the various peripheral tissues. This chain is Hemoglobin subunit alpha-D/D' (HBAD), found in Gyps rueppelli (Rueppell's griffon).